A 363-amino-acid chain; its full sequence is Protein RecA (363 aa).

79 to 86 (GPESSGKT) is an ATP binding site.

The protein belongs to the RecA family.

It is found in the cytoplasm. Its function is as follows. Can catalyze the hydrolysis of ATP in the presence of single-stranded DNA, the ATP-dependent uptake of single-stranded DNA by duplex DNA, and the ATP-dependent hybridization of homologous single-stranded DNAs. It interacts with LexA causing its activation and leading to its autocatalytic cleavage. This Methylobacterium radiotolerans (strain ATCC 27329 / DSM 1819 / JCM 2831 / NBRC 15690 / NCIMB 10815 / 0-1) protein is Protein RecA.